Consider the following 359-residue polypeptide: Trans-enoyl reductase FSL5 (359 aa).

NADP(+) is bound at residue 47–50 (IDGK). Position 134–141 (134–141 (SGVGTIGL)) interacts with substrate. Residues 169-172 (STAT), 192-195 (SPHN), Y210, and 257-258 (LE) contribute to the NADP(+) site. 277–281 (GPTLL) contributes to the substrate binding site. Residue 346–347 (VS) participates in NADP(+) binding.

It belongs to the zinc-containing alcohol dehydrogenase family. In terms of assembly, monomer.

It functions in the pathway secondary metabolite biosynthesis. Its function is as follows. Trans-enoyl reductase; part of the gene cluster that mediates the biosynthesis of fusarielins F, G and H, decaketide compounds with 5 methylations and a decaline core that act as mycoestrogens as they stimulate growth of MCF-7 breast cancer cells. The initial compound in the pathway is produced by the reducing polyketide synthase FSL1. FSL1 lacks an active enoyl reductase (ER) domain and biosynthesis of fusarielins relies on the trans-acting enoyl reductase FSL5, before it is released through hydrolysis catalyzed by the thioesterase FSL2. Fusarielins F, G, and H have a C11=C12 cis double bond and is fully reduced between C10 and C11 and between C12 and C13. FSL3 can be involved in the formation of the C11=C12 cis double bond by moving a hypothetical C10=C11 or C12=C13 trans double bond to form prefusarielin. Prefusarielin is oxygenated at C15 and C16 by the cytochrome P450 monooxygenase FSL4, resulting in fusarielin F, which subsequently is epoxidized into fusarielin G by the same enzyme. The final step in the pathway is a reduction of the carboxylic acid moiety to yield fusarielin H via a still undetermined mechanism. This is Trans-enoyl reductase FSL5 from Gibberella zeae (strain ATCC MYA-4620 / CBS 123657 / FGSC 9075 / NRRL 31084 / PH-1) (Wheat head blight fungus).